Reading from the N-terminus, the 75-residue chain is UPF0291 protein lmo1304 (75 aa).

Residues 56–75 (DPNGKDVTPHKVKQLRKNKY) form a disordered region. Residues 65-75 (HKVKQLRKNKY) are compositionally biased toward basic residues.

This sequence belongs to the UPF0291 family.

The protein localises to the cytoplasm. This chain is UPF0291 protein lmo1304, found in Listeria monocytogenes serovar 1/2a (strain ATCC BAA-679 / EGD-e).